Here is a 407-residue protein sequence, read N- to C-terminus: tRNA-specific 2-thiouridylase MnmA (407 aa).

ATP contacts are provided by residues 20–27 (AMSGGVDS) and L46. C114 functions as the Nucleophile in the catalytic mechanism. C114 and C210 are disulfide-bonded. G138 contacts ATP. Residues 160–162 (RDQ) form an interaction with tRNA region. C210 functions as the Cysteine persulfide intermediate in the catalytic mechanism.

The protein belongs to the MnmA/TRMU family.

It is found in the cytoplasm. It carries out the reaction S-sulfanyl-L-cysteinyl-[protein] + uridine(34) in tRNA + AH2 + ATP = 2-thiouridine(34) in tRNA + L-cysteinyl-[protein] + A + AMP + diphosphate + H(+). In terms of biological role, catalyzes the 2-thiolation of uridine at the wobble position (U34) of tRNA, leading to the formation of s(2)U34. The polypeptide is tRNA-specific 2-thiouridylase MnmA (Bartonella tribocorum (strain CIP 105476 / IBS 506)).